The primary structure comprises 512 residues: tRNA modification GTPase gtpbp3, mitochondrial (512 aa).

Positions 246–434 constitute a TrmE-type G domain; that stretch reads GANIAIVGPP…LLNLLKLNLK (189 aa). GTP-binding positions include 253–260, 300–304, and 375–378; these read GPPNAGKS, DTAGL, and NKSD.

Belongs to the TRAFAC class TrmE-Era-EngA-EngB-Septin-like GTPase superfamily. TrmE GTPase family.

It is found in the mitochondrion. Its function is as follows. GTPase involved in the 5-carboxymethylaminomethyl modification (mnm(5)s(2)U34) of the wobble uridine base in mitochondrial tRNAs. The chain is tRNA modification GTPase gtpbp3, mitochondrial (gtpbp3) from Dictyostelium discoideum (Social amoeba).